Here is a 207-residue protein sequence, read N- to C-terminus: Small ribosomal subunit protein uS4 (207 aa).

An S4 RNA-binding domain is found at 97 to 160 (SRLDNVVYRM…KKQARIVEAL (64 aa)).

It belongs to the universal ribosomal protein uS4 family. Part of the 30S ribosomal subunit. Contacts protein S5. The interaction surface between S4 and S5 is involved in control of translational fidelity.

In terms of biological role, one of the primary rRNA binding proteins, it binds directly to 16S rRNA where it nucleates assembly of the body of the 30S subunit. With S5 and S12 plays an important role in translational accuracy. The protein is Small ribosomal subunit protein uS4 of Burkholderia pseudomallei (strain 1106a).